Consider the following 238-residue polypeptide: Ribonuclease PH (238 aa).

Residues arginine 86 and 124 to 126 contribute to the phosphate site; that span reads GTR.

It belongs to the RNase PH family. Homohexameric ring arranged as a trimer of dimers.

The catalysed reaction is tRNA(n+1) + phosphate = tRNA(n) + a ribonucleoside 5'-diphosphate. In terms of biological role, phosphorolytic 3'-5' exoribonuclease that plays an important role in tRNA 3'-end maturation. Removes nucleotide residues following the 3'-CCA terminus of tRNAs; can also add nucleotides to the ends of RNA molecules by using nucleoside diphosphates as substrates, but this may not be physiologically important. Probably plays a role in initiation of 16S rRNA degradation (leading to ribosome degradation) during starvation. This Haemophilus influenzae (strain PittEE) protein is Ribonuclease PH.